Here is a 124-residue protein sequence, read N- to C-terminus: Holo-[acyl-carrier-protein] synthase (124 aa).

D7 and E55 together coordinate Mg(2+).

Belongs to the P-Pant transferase superfamily. AcpS family. Mg(2+) serves as cofactor.

It localises to the cytoplasm. It catalyses the reaction apo-[ACP] + CoA = holo-[ACP] + adenosine 3',5'-bisphosphate + H(+). Transfers the 4'-phosphopantetheine moiety from coenzyme A to a Ser of acyl-carrier-protein. The sequence is that of Holo-[acyl-carrier-protein] synthase from Borrelia garinii subsp. bavariensis (strain ATCC BAA-2496 / DSM 23469 / PBi) (Borreliella bavariensis).